The following is a 394-amino-acid chain: Elongation factor Tu (394 aa).

The tr-type G domain maps to 10 to 204; sequence KPHVNVGTIG…ALDRYIPTPE (195 aa). A G1 region spans residues 19–26; the sequence is GHVDHGKT. 19–26 is a GTP binding site; it reads GHVDHGKT. Mg(2+) is bound at residue threonine 26. Positions 60–64 are G2; it reads GITIN. The G3 stretch occupies residues 81-84; the sequence is DCPG. GTP contacts are provided by residues 81 to 85 and 136 to 139; these read DCPGH and NKCD. The interval 136–139 is G4; that stretch reads NKCD. The tract at residues 174 to 176 is G5; sequence SAL.

Belongs to the TRAFAC class translation factor GTPase superfamily. Classic translation factor GTPase family. EF-Tu/EF-1A subfamily. Monomer.

It is found in the cytoplasm. The enzyme catalyses GTP + H2O = GDP + phosphate + H(+). Its function is as follows. GTP hydrolase that promotes the GTP-dependent binding of aminoacyl-tRNA to the A-site of ribosomes during protein biosynthesis. The polypeptide is Elongation factor Tu (Neisseria gonorrhoeae).